The following is a 273-amino-acid chain: Co-chaperone protein DjlA (273 aa).

The Periplasmic portion of the chain corresponds to 1–6 (MHYWGK). A helical transmembrane segment spans residues 7–31 (LLGLIFGVVSGAGFWGIVIGLFIGH). Residues 32-273 (MLDRASVRGN…DLIKKEKGFK (242 aa)) are Cytoplasmic-facing. A J domain is found at 207–273 (DACKVLGVRE…DLIKKEKGFK (67 aa)).

Homodimer.

Its subcellular location is the cell inner membrane. Regulatory DnaK co-chaperone. Direct interaction between DnaK and DjlA is needed for the induction of the wcaABCDE operon, involved in the synthesis of a colanic acid polysaccharide capsule, possibly through activation of the RcsB/RcsC phosphotransfer signaling pathway. The colanic acid capsule may help the bacterium survive conditions outside the host. In Photorhabdus laumondii subsp. laumondii (strain DSM 15139 / CIP 105565 / TT01) (Photorhabdus luminescens subsp. laumondii), this protein is Co-chaperone protein DjlA.